We begin with the raw amino-acid sequence, 759 residues long: 1,4-alpha-glucan branching enzyme GlgB (759 aa).

Residues 1–21 (MAKTKGLPKDTAVTPSPHLRP) are disordered. Residue D422 is the Nucleophile of the active site. The active-site Proton donor is the E475.

Belongs to the glycosyl hydrolase 13 family. GlgB subfamily. As to quaternary structure, monomer.

It catalyses the reaction Transfers a segment of a (1-&gt;4)-alpha-D-glucan chain to a primary hydroxy group in a similar glucan chain.. Its pathway is glycan biosynthesis; glycogen biosynthesis. Its function is as follows. Catalyzes the formation of the alpha-1,6-glucosidic linkages in glycogen by scission of a 1,4-alpha-linked oligosaccharide from growing alpha-1,4-glucan chains and the subsequent attachment of the oligosaccharide to the alpha-1,6 position. The chain is 1,4-alpha-glucan branching enzyme GlgB from Mycobacterium sp. (strain JLS).